We begin with the raw amino-acid sequence, 856 residues long: MTLSAAPLQHWRQTLAEKRQQLADAYRADRDAPAFLRRYSQAVDQTLAALWREQGLDGQAALAAVGGYGRGQLFPCSDVDILILLPDPTPAEINDKVSHFIGLMWDIGLEIGHSVRTLDECLREAAGDITIETNLLENRLVAGPAEPWRELMRRLEAQRDPLAFFEGKTLEQQQRHTRHFGVSNNLEPNLKESPGGLRDLHTILWISKAAGLGDNWDSLVRRGILTLAEARLIKHSEEQLQKLRVDLHLLARRREDRLIFDLQQQVAQAWGLADTPAKRASEQLMQLYFRAAKTVNQLNGILLPNLRGRIYCQVPRVTQHISEYFHAVNGMLGIREVNVFDKHPHAILEAFLTLQRHPELSGFAPRMLRALWHGRSQINDRFRSDPRNRATFMQIFREPSGLTRTLRRMNLYGILGQYLPNFGQIVGQMQHDLFHVYTVDEHILMVVRNLRRFAISAYNHEYPFLSRLINDFERPEVLYLAGLFHDIAKGRGGDHSQLGIADADAFCRDHGLAEEDCQLVAWLVGQHLTMSSIAQKQDIYDPETVQRFAELVRTPRRLAALYLLTVADIRGTSPKVWNTWKAKLLEDLYHATLRVLSRGGEIDLASELEARKNQARAQLRLHAIPDAAEAGLWAQLDTVYFLRHEAKEIAWHARVLNRQLSPDTPQVRARLADDHEGLQVLIYSPDKPELFARACAFFGRTNYSIADAKVYTTRHGYALDTFHVFVPEHHDGDYRDMINFIEFELAAALATDQPLQLPPQGRISRHLKHFPITPQVSIRPDDKDSDFILSIVAGDRPGLLARIAKVLADYRLNVRSAKIMTLGGRAEDSFQVSGAALKDDKTALALEAALITALRI.

The tract at residues 1-320 (MTLSAAPLQH…YCQVPRVTQH (320 aa)) is uridylyltransferase. The interval 321–678 (ISEYFHAVNG…ARLADDHEGL (358 aa)) is uridylyl-removing. In terms of domain architecture, HD spans 439 to 561 (VDEHILMVVR…VRTPRRLAAL (123 aa)). 2 ACT domains span residues 679 to 760 (QVLI…LPPQ) and 788 to 856 (ILSI…ALRI).

Belongs to the GlnD family. The cofactor is Mg(2+).

It catalyses the reaction [protein-PII]-L-tyrosine + UTP = [protein-PII]-uridylyl-L-tyrosine + diphosphate. It carries out the reaction [protein-PII]-uridylyl-L-tyrosine + H2O = [protein-PII]-L-tyrosine + UMP + H(+). With respect to regulation, uridylyltransferase (UTase) activity is inhibited by glutamine, while glutamine activates uridylyl-removing (UR) activity. In terms of biological role, modifies, by uridylylation and deuridylylation, the PII regulatory proteins (GlnB and homologs), in response to the nitrogen status of the cell that GlnD senses through the glutamine level. Under low glutamine levels, catalyzes the conversion of the PII proteins and UTP to PII-UMP and PPi, while under higher glutamine levels, GlnD hydrolyzes PII-UMP to PII and UMP (deuridylylation). Thus, controls uridylylation state and activity of the PII proteins, and plays an important role in the regulation of nitrogen assimilation and metabolism. This is Bifunctional uridylyltransferase/uridylyl-removing enzyme from Chromobacterium violaceum (strain ATCC 12472 / DSM 30191 / JCM 1249 / CCUG 213 / NBRC 12614 / NCIMB 9131 / NCTC 9757 / MK).